Consider the following 1873-residue polypeptide: MQSLDSSCQEADFIINDTLKKLKGSSNADHVQGLAVHAHGSGVHQTQFVQYGTSGSSPQLQPQQSYHQLHPTLQQQQFASSSSKSYLETSLLQAIPQIPAQPPICIFDDDESPTEGTGGSLGSLLTEPTSATPSGLPTAIAPSPSSCSSSTTTMSNFNSITSPSPVVPDLLLSTPPGVNSSLSNSSTGAASVSSKKSEKRPPSANSTASGGGHHLHHHHLHQTHNHHVLASPTSSPSKRQKSNSSSKESSSSSRSSAIPAASVSTATSSSQSARAGAGAASSNSNSKPPSSVCQSGNSKFFNLHEKIRDLYLQLLSNDLNYFAETGLKQRTRSFTLERLVDREKLNTIVVNLYPGNKGYSLALHYDEHMVLNPQTNEWSPTDKDETSSDAAGLGTGTGSHRSRPKPLAQDESQSKTEAGHAKHDFGLVEVLRWPYENDLLLQCIDREMLPEFLMDLLVAETVSLSDGEGTRVYAKPSVFYAGCVIAQIRDFRQTFATSTNICDMKHILLRPTNATLFAEVQQMGSQLPAEDKLALESQLVLATAEPLCLEPDPSIGRQAINSQHQRQLYNSHELRRQMKKFTQTAINRKRKLDQFTHHHGLELCDYLARLRQRPRTGSSSGGANATPATAPTNNPLVGAMLSSFTSKVPRRPHEVIRPIRPPTLEYPANLKVPEHVISVEKYAKAYEPLNEFSEACKDGCQPNCRHNFQPQLVEEYILETEREASEGRRALYHIKLSIFQRPSDAEYLGELYVDRDYREGERNGESCRFALGTRVHANRYIQQFREIFTEEGRKAVKITHLIPGHMPIVTHTGLTNEQRILLQQQQQQQQRQAQMQQQQQQQQQQVVVVANQQQQSQQQQQTQQAGQQLSATVHHVALPRQQITQKTLNLAGSNVINVQQNFRQQSAQQQQPQTYTIEAPQQQAAAQIVPQQQQQQQQQQQQHIHLQQLATGSSNTSTTTHQVSLSNGSLVLVQQQQPQQQSQQLAQALQHSGITIQPATIQQQQQQVKGTSVVGANSALRAQLNSNVPILQTQLKVQQQQIMQKQQQQQTTATSNNNNNNNNNNNMNNNTAIHPNPAINAIVNSIMNSANQYQQQQQQQHQQQHQQQTGNTSSNNNAAGSGGSTNNNGSSTSATTLKNSSNASILNLLNSAPAAMTSTPVASGTFTTSTGQQQPQTLTLVQHQQQSTPNTADAATATYVQTTRGTPTLVSTQRKQQSSEVLQNLLNANRKIGGGGTTTTTFRTNSAGNLIAVNLNQAGQSHHQQTGDGSQTVRVSMSALASQLASPPAVMTNPTTSYTVISSGNSAAAAAAWIQSPTGPVQQRILSSLRRDSTTAPPNAIVVGMAAPSPGSDSNASNASGFAVPNNLASTSSGGGGGGGALSALLTNAATPSPSGSDHSQSSQTHQNQALLERLSNVTSNVSAVSMPHMSPQQPQPTQQFITKTIVHSPATSSIHSPMSSPHPQPSASPQQQQQQQQQQTTATLNLQGINLSQLQGAMANFAGLQNVQVQIPGFTQPISLQFSGNSLQQQQSGNTATGAGTAQGQQRSVLVSVPVSSQQQQLPHTITLQTQSAPHHQQQHQQTQQQHAPPTGTIVSLPSSGPGTQTVVITNNSGGGVTAGSSTSGSAGGGGGSGATTAMLTLPIAQIVGAGVQKLNPQTIRTSNVGGGIGIAQQTVQQQTIQSQSGGNSTAAIQLLGTIQPRARNVQVVGTKQLANRQLITTQRQIGGSTLKIATTPVNAANVVTSSANLTTTPIVMSAQKLQLKTVKAPVQQQQQPQQQQQQLQQQHRILNQQSTATVSSQTLPSPNQVQVAQQQQQQQQQLQHIQIAGRATTASGAISQRTLTALAAAKQQQQQQQAAVNRRRSTTDATK.

It belongs to the SPT20 family. As to quaternary structure, component of the Spt-Ada-Gcn5 acetyltransferase (SAGA) complex consisting of wda/Taf5L, Saf6, Taf9, Taf10b, Taf12, Ada1, Spt3, Spt7, Spt20, Sf3b3, Sf3b5, Nipped-A/Tra1, a histone acetyltransferase (HAT) module made up of Gcn5, Ada2b (Isoform B), Ada3 and Sgf29, and a deubiquitinase (DUB) module made up of not/nonstop, Sgf11 and e(y)2 tethered to SAGA by Atxn7.

It localises to the nucleus. Its function is as follows. Component of the transcription regulatory complex SAGA, a multiprotein complex that activates transcription by remodeling chromatin and mediating histone acetylation and deubiquitination. The SAGA complex predominantly acetylates histone H3. This Drosophila melanogaster (Fruit fly) protein is SAGA complex subunit Spt20.